A 219-amino-acid chain; its full sequence is Oxaloacetate tautomerase YcgM (219 aa).

The Mg(2+) site is built by Glu-70, Glu-72, and Asp-101.

The protein belongs to the FAH family. It depends on a divalent metal cation as a cofactor.

It catalyses the reaction oxaloacetate = enol-oxaloacetate. Functionally, tautomerase that converts enol-oxaloacetate to the keto form of oxaloacetate. This Escherichia coli (strain K12) protein is Oxaloacetate tautomerase YcgM.